The primary structure comprises 148 residues: Large ribosomal subunit protein uL13 (148 aa).

Composition is skewed to basic and acidic residues over residues 71-81 and 89-99; these read GKKEKQKEYHE and DHSHSPEEMRA. Disordered stretches follow at residues 71 to 99 and 125 to 148; these read GKKEKQKEYHEYSGYPGGDHSHSPEEMRA and KKLKVYAGPDHPHEAQQPEPLDNA.

The protein belongs to the universal ribosomal protein uL13 family. In terms of assembly, part of the 50S ribosomal subunit.

Functionally, this protein is one of the early assembly proteins of the 50S ribosomal subunit, although it is not seen to bind rRNA by itself. It is important during the early stages of 50S assembly. The polypeptide is Large ribosomal subunit protein uL13 (Salinibacter ruber (strain DSM 13855 / M31)).